A 554-amino-acid chain; its full sequence is Rab GTPase-binding effector protein 2 (554 aa).

Disordered stretches follow at residues 1 to 28 (MAAA…SELS), 167 to 208 (IQRR…GPAA), and 371 to 395 (GLRA…DEAL). Positions 14-28 (PQEKQKDASESSELS) are enriched in basic and acidic residues. The stretch at 15–173 (QEKQKDASES…IQEIQRRPRQ (159 aa)) forms a coiled coil. 4 positions are modified to phosphoserine: Ser-176, Ser-180, Ser-187, and Ser-191. Residues 274–509 (DSQWEQLQVE…QAELETSEQV (236 aa)) are a coiled coil.

Belongs to the rabaptin family. Heterodimer with RABGEF1. The dimer binds RAB5A that has been activated by GTP-binding. Interacts with SDCCAG8; this interaction is important for ciliogenesis regulation. Interacts with RAB4A; this interaction may mediate VEGFR2 cell surface expression.

It localises to the cytoplasm. Its subcellular location is the early endosome. It is found in the cytoskeleton. The protein resides in the microtubule organizing center. The protein localises to the centrosome. It localises to the cilium basal body. Plays a role in membrane trafficking and in homotypic early endosome fusion. Participates in arteriogenesis by regulating vascular endothelial growth factor receptor 2/VEGFR2 cell surface expression and endosomal trafficking. By interacting with SDCCAG8, localizes to centrosomes and plays a critical role in ciliogenesis. The polypeptide is Rab GTPase-binding effector protein 2 (Rabep2) (Mus musculus (Mouse)).